A 316-amino-acid chain; its full sequence is UDP-N-acetylenolpyruvoylglucosamine reductase (316 aa).

The FAD-binding PCMH-type domain maps to 30–194; that stretch reads VGGEADYLVF…LSVKFALAPG (165 aa). Residue Arg-173 is part of the active site. The Proton donor role is filled by Ser-223. Glu-293 is an active-site residue.

It belongs to the MurB family. It depends on FAD as a cofactor.

Its subcellular location is the cytoplasm. The catalysed reaction is UDP-N-acetyl-alpha-D-muramate + NADP(+) = UDP-N-acetyl-3-O-(1-carboxyvinyl)-alpha-D-glucosamine + NADPH + H(+). It participates in cell wall biogenesis; peptidoglycan biosynthesis. Its function is as follows. Cell wall formation. This chain is UDP-N-acetylenolpyruvoylglucosamine reductase, found in Streptococcus pneumoniae serotype 19F (strain G54).